We begin with the raw amino-acid sequence, 494 residues long: Bifunctional pantoate ligase/cytidylate kinase (494 aa).

The tract at residues 1-258 (MHFVPTMGGL…CGSTRLIDHA (258 aa)) is pantoate--beta-alanine ligase. 7-14 (MGGLHHGH) is an ATP binding site. Catalysis depends on His-14, which acts as the Proton donor. Gln-41 serves as a coordination point for (R)-pantoate. Beta-alanine is bound at residue Gln-41. 130 to 133 (GEKD) contributes to the ATP binding site. Gln-136 contacts (R)-pantoate. ATP contacts are provided by residues Val-159 and 167–170 (SSSR). The interval 259 to 494 (FLMTRSPLVA…VGEEVWPTPV (236 aa)) is cytidylate kinase.

The protein in the N-terminal section; belongs to the pantothenate synthetase family. In the C-terminal section; belongs to the cytidylate kinase family. Type 1 subfamily.

It localises to the cytoplasm. It carries out the reaction (R)-pantoate + beta-alanine + ATP = (R)-pantothenate + AMP + diphosphate + H(+). It catalyses the reaction CMP + ATP = CDP + ADP. The catalysed reaction is dCMP + ATP = dCDP + ADP. Its pathway is cofactor biosynthesis; (R)-pantothenate biosynthesis; (R)-pantothenate from (R)-pantoate and beta-alanine: step 1/1. Functionally, catalyzes the condensation of pantoate with beta-alanine in an ATP-dependent reaction via a pantoyl-adenylate intermediate. Catalyzes the transfer of a phosphate group from ATP to either CMP or dCMP to form CDP or dCDP and ADP, respectively. In Synechococcus sp. (strain CC9311), this protein is Bifunctional pantoate ligase/cytidylate kinase.